A 239-amino-acid chain; its full sequence is 4-hydroxy-tetrahydrodipicolinate reductase (239 aa).

Residues 9–14, 78–80, and 104–107 contribute to the NAD(+) site; these read GINGKM, GTT, and APNF. The active-site Proton donor/acceptor is His134. His135 lines the (S)-2,3,4,5-tetrahydrodipicolinate pocket. The Proton donor role is filled by Lys138. 144–145 is a binding site for (S)-2,3,4,5-tetrahydrodipicolinate; sequence GT.

It belongs to the DapB family.

The protein resides in the cytoplasm. The catalysed reaction is (S)-2,3,4,5-tetrahydrodipicolinate + NAD(+) + H2O = (2S,4S)-4-hydroxy-2,3,4,5-tetrahydrodipicolinate + NADH + H(+). It carries out the reaction (S)-2,3,4,5-tetrahydrodipicolinate + NADP(+) + H2O = (2S,4S)-4-hydroxy-2,3,4,5-tetrahydrodipicolinate + NADPH + H(+). It participates in amino-acid biosynthesis; L-lysine biosynthesis via DAP pathway; (S)-tetrahydrodipicolinate from L-aspartate: step 4/4. Catalyzes the conversion of 4-hydroxy-tetrahydrodipicolinate (HTPA) to tetrahydrodipicolinate. The polypeptide is 4-hydroxy-tetrahydrodipicolinate reductase (Coxiella burnetii (strain Dugway 5J108-111)).